A 261-amino-acid polypeptide reads, in one-letter code: Pantothenate synthetase (261 aa).

ATP is bound at residue 29–36 (MGALHNGH). His-36 acts as the Proton donor in catalysis. Gln-60 is a binding site for (R)-pantoate. Gln-60 is a beta-alanine binding site. Residue 147-150 (GEKD) participates in ATP binding. Gln-153 is a (R)-pantoate binding site. 184-187 (LSSR) contributes to the ATP binding site.

Belongs to the pantothenate synthetase family. In terms of assembly, homodimer.

It is found in the cytoplasm. It carries out the reaction (R)-pantoate + beta-alanine + ATP = (R)-pantothenate + AMP + diphosphate + H(+). It functions in the pathway cofactor biosynthesis; (R)-pantothenate biosynthesis; (R)-pantothenate from (R)-pantoate and beta-alanine: step 1/1. Functionally, catalyzes the condensation of pantoate with beta-alanine in an ATP-dependent reaction via a pantoyl-adenylate intermediate. The chain is Pantothenate synthetase from Francisella tularensis subsp. tularensis (strain FSC 198).